Here is a 130-residue protein sequence, read N- to C-terminus: Ribonuclease P protein component 2 (130 aa).

This sequence belongs to the eukaryotic/archaeal RNase P protein component 2 family. As to quaternary structure, consists of a catalytic RNA component and at least 4-5 protein subunits.

The protein localises to the cytoplasm. The enzyme catalyses Endonucleolytic cleavage of RNA, removing 5'-extranucleotides from tRNA precursor.. In terms of biological role, part of ribonuclease P, a protein complex that generates mature tRNA molecules by cleaving their 5'-ends. In Methanococcus maripaludis (strain C7 / ATCC BAA-1331), this protein is Ribonuclease P protein component 2.